The following is a 327-amino-acid chain: Ribosomal RNA large subunit methyltransferase F (327 aa).

Residues M1–H24 are disordered.

This sequence belongs to the methyltransferase superfamily. METTL16/RlmF family.

The protein localises to the cytoplasm. The catalysed reaction is adenosine(1618) in 23S rRNA + S-adenosyl-L-methionine = N(6)-methyladenosine(1618) in 23S rRNA + S-adenosyl-L-homocysteine + H(+). Functionally, specifically methylates the adenine in position 1618 of 23S rRNA. In Stutzerimonas stutzeri (strain A1501) (Pseudomonas stutzeri), this protein is Ribosomal RNA large subunit methyltransferase F.